The following is a 127-amino-acid chain: Mating pheromone 4 (127 aa).

A signal peptide spans 1-16; that stretch reads MKAIFIILAILMVTQA. The propeptide occupies 17–42; it reads FKMTSKVKSMNMSRNMSKNTSTLGTK.

It localises to the secreted. Mating ciliate pheromones (or gamones) are diffusible extracellular communication signals that distinguish different intraspecific classes of cells commonly referred to as 'mating types'. They prepare the latter for conjugation by changing their cell surface properties. The chain is Mating pheromone 4 (PHR4) from Euplotoides octocarinatus (Freshwater ciliate).